The primary structure comprises 417 residues: uncharacterized protein (417 aa).

9 consecutive transmembrane segments (helical) span residues 1 to 21, 32 to 52, 96 to 116, 168 to 188, 192 to 212, 261 to 281, 286 to 306, 351 to 371, and 392 to 412; these read MSVL…VLLS, VVGA…VPAG, VLPI…LGIM, LFAI…AGYA, VPLT…LLFA, IAFV…GGWF, LTLQ…IGVT, AIIT…ILIG, and VIAG…FIGL.

Belongs to the concentrative nucleoside transporter (CNT) (TC 2.A.41) family.

Its subcellular location is the cell inner membrane. This is an uncharacterized protein from Haemophilus influenzae (strain ATCC 51907 / DSM 11121 / KW20 / Rd).